A 559-amino-acid chain; its full sequence is U-box domain-containing protein 41 (559 aa).

Disordered stretches follow at residues 1–30 (MGGN…KHDE) and 121–156 (RMDK…SPSD). Residues 12–24 (HQRSSSATTTTLP) are compositionally biased toward polar residues. A U-box domain is found at 30–104 (ETPPEFLCPI…FSWCDRQKVD (75 aa)). ARM repeat units lie at residues 266–305 (EDLR…NLSL), 307–346 (KQNK…SLAL), 348–388 (DENK…HLSL), 390–427 (PSNR…NLAA), and 428–472 (CPDG…TLCQ).

It carries out the reaction S-ubiquitinyl-[E2 ubiquitin-conjugating enzyme]-L-cysteine + [acceptor protein]-L-lysine = [E2 ubiquitin-conjugating enzyme]-L-cysteine + N(6)-ubiquitinyl-[acceptor protein]-L-lysine.. It functions in the pathway protein modification; protein ubiquitination. Its function is as follows. Functions as an E3 ubiquitin ligase. In Arabidopsis thaliana (Mouse-ear cress), this protein is U-box domain-containing protein 41 (PUB41).